A 65-amino-acid polypeptide reads, in one-letter code: uncharacterized protein (65 aa).

An N-terminal signal peptide occupies residues 1–16; the sequence is MMHVCSLLVSFDVVKS.

This is an uncharacterized protein from Saccharomyces cerevisiae (strain ATCC 204508 / S288c) (Baker's yeast).